Here is a 344-residue protein sequence, read N- to C-terminus: Lysophosphatidic acid receptor 6 (344 aa).

Residues 1–25 (MVSSNGSQCPYDDSFKYTLYGCMFS) are Extracellular-facing. Asn5 is a glycosylation site (N-linked (GlcNAc...) asparagine). A helical transmembrane segment spans residues 26–46 (MVFVLGLISNCVAIYIFICAL). Over 47-56 (KVRNETTTYM) the chain is Cytoplasmic. A helical transmembrane segment spans residues 57-77 (INLAMSDLLFVFTLPFRIFYF). Topologically, residues 78-90 (ATRNWPFGDLLCK) are extracellular. Cys89 and Cys168 are oxidised to a cystine. Residues 91–111 (ISVMLFYTNMYGSILFLTCIS) form a helical membrane-spanning segment. At 112–134 (VDRFLAIVYPFKSKTLRTKRNAK) the chain is on the cytoplasmic side. Residues 135-155 (IVCIAVWFTVMGGSAPAVFFQ) form a helical membrane-spanning segment. The Extracellular portion of the chain corresponds to 156–183 (STHSQGNNTSEACFENFPAATWKTYLSR). 2 N-linked (GlcNAc...) asparagine glycosylation sites follow: Asn162 and Asn163. Residues 184–204 (IVIFIEIVGFFIPLILNVTCS) form a helical membrane-spanning segment. The Cytoplasmic portion of the chain corresponds to 205-230 (SMVLRTLNKPVTLSRSKMNKTKVLKM). A helical transmembrane segment spans residues 231-251 (IFVHLVIFCFCFVPYNINLIL). Residues 252–272 (YSLMRTQTFVNCSVVAAVRTM) lie on the Extracellular side of the membrane. N-linked (GlcNAc...) asparagine glycosylation is present at Asn262. A helical transmembrane segment spans residues 273–293 (YPITLCIAVSNCCFDPIVYYF). The S-palmitoyl cysteine moiety is linked to residue Cys284. The Cytoplasmic segment spans residues 294 to 344 (TSDTIQNSIKMKNWSVRRSDSRFSEVQGTENFIQHNLQTLKNKIFDNESAI).

It belongs to the G-protein coupled receptor 1 family. In terms of tissue distribution, ubiquitously expressed. Detected in the hair follicles and skin (at protein level).

The protein resides in the cell membrane. Functionally, binds to oleoyl-L-alpha-lysophosphatidic acid (LPA). Intracellular cAMP is involved in the receptor activation. Important for the maintenance of hair growth and texture. The chain is Lysophosphatidic acid receptor 6 (Lpar6) from Mus musculus (Mouse).